We begin with the raw amino-acid sequence, 434 residues long: ATP phosphoribosyltransferase regulatory subunit (434 aa).

Belongs to the class-II aminoacyl-tRNA synthetase family. HisZ subfamily. In terms of assembly, heteromultimer composed of HisG and HisZ subunits.

It localises to the cytoplasm. The protein operates within amino-acid biosynthesis; L-histidine biosynthesis; L-histidine from 5-phospho-alpha-D-ribose 1-diphosphate: step 1/9. Its function is as follows. Required for the first step of histidine biosynthesis. May allow the feedback regulation of ATP phosphoribosyltransferase activity by histidine. The sequence is that of ATP phosphoribosyltransferase regulatory subunit from Geobacter metallireducens (strain ATCC 53774 / DSM 7210 / GS-15).